The chain runs to 82 residues: ATP synthase subunit c, chloroplastic (82 aa).

2 consecutive transmembrane segments (helical) span residues 7 to 27 and 57 to 77; these read AASVVASGLSVGLAAIGPGIG and LAFMESLTIYGLVVALALLFA.

Belongs to the ATPase C chain family. F-type ATPases have 2 components, F(1) - the catalytic core - and F(0) - the membrane proton channel. F(1) has five subunits: alpha(3), beta(3), gamma(1), delta(1), epsilon(1). F(0) has four main subunits: a(1), b(1), b'(1) and c(10-14). The alpha and beta chains form an alternating ring which encloses part of the gamma chain. F(1) is attached to F(0) by a central stalk formed by the gamma and epsilon chains, while a peripheral stalk is formed by the delta, b and b' chains.

It localises to the plastid. Its subcellular location is the chloroplast thylakoid membrane. F(1)F(0) ATP synthase produces ATP from ADP in the presence of a proton or sodium gradient. F-type ATPases consist of two structural domains, F(1) containing the extramembraneous catalytic core and F(0) containing the membrane proton channel, linked together by a central stalk and a peripheral stalk. During catalysis, ATP synthesis in the catalytic domain of F(1) is coupled via a rotary mechanism of the central stalk subunits to proton translocation. In terms of biological role, key component of the F(0) channel; it plays a direct role in translocation across the membrane. A homomeric c-ring of between 10-14 subunits forms the central stalk rotor element with the F(1) delta and epsilon subunits. In Guillardia theta (Cryptophyte), this protein is ATP synthase subunit c, chloroplastic.